Reading from the N-terminus, the 1774-residue chain is Receptor-mediated endocytosis protein 6 homolog (1774 aa).

The region spanning 157–396 (ELLLKLLREL…EDVVAILPQQ (240 aa)) is the Ras-GAP domain. Disordered stretches follow at residues 444 to 480 (IPKQ…NNRS), 517 to 564 (PLAN…PAPT), 661 to 727 (AAHS…HHHG), 784 to 811 (ENTL…RNFS), 869 to 947 (AEID…EDSA), 983 to 1102 (ESSF…EEQP), 1115 to 1142 (QEEQ…SMEQ), and 1214 to 1342 (RAGA…GGRS). 2 stretches are compositionally biased toward low complexity: residues 519-533 (ANGQ…SASN) and 540-557 (SSHS…AAPA). The span at 674–683 (QQERDVHENE) shows a compositional bias: basic and acidic residues. The segment covering 688–713 (DMVSANVSGRGTPNISGRDTPSSQVT) has biased composition (polar residues). Over residues 794-809 (RGGDRGDRGDRDRDRN) the composition is skewed to basic and acidic residues. Positions 887 to 905 (PGSGGGAGVPEAGGGGGVV) are enriched in gly residues. A compositionally biased stretch (basic and acidic residues) spans 929–944 (DPDRERLRNGSERSQE). Residues 1011-1027 (MRRQTSAESSISNQSLN) are compositionally biased toward polar residues. The span at 1038-1047 (LAKHHHHHQH) shows a compositional bias: basic residues. Positions 1048–1060 (RDRDRDRDRDRDH) are enriched in basic and acidic residues. Residues 1061–1076 (REHHHKSAALKKKKHQ) are compositionally biased toward basic residues. Residues 1077–1087 (EHKEHQHRDLI) are compositionally biased toward basic and acidic residues. Positions 1091 to 1101 (DCSEDKDEEEQ) are enriched in acidic residues. The segment covering 1115-1125 (QEEQQQQQQQQ) has biased composition (low complexity). Basic and acidic residues predominate over residues 1246–1291 (SADKEQQPYRDRERERDRERDRERDRDRERDRDRDRDRDRDREHHS). A compositionally biased stretch (low complexity) spans 1310 to 1335 (SSSSKNNAIAIAAPSSINPNPSPSSA). Residues 1516–1546 (RHRQQLLLRSEQLEQLEVRLRSEARSCQRCL) are a coiled coil. The VPS9 domain occupies 1635-1774 (VSRDTVLSAH…KFIKTMDYLD (140 aa)).

This sequence belongs to the GAPVD1 family.

It localises to the membrane. Functionally, acts both as a GTPase-activating protein (GAP) and a guanine nucleotide exchange factor (GEF), and participates in endocytosis. This Drosophila pseudoobscura pseudoobscura (Fruit fly) protein is Receptor-mediated endocytosis protein 6 homolog.